A 525-amino-acid polypeptide reads, in one-letter code: Asparagine synthetase domain-containing protein YML096W (525 aa).

C2 (for GATase activity) is an active-site residue. The Glutamine amidotransferase type-2 domain maps to 2–209 (CGILLHYCPN…LNSNQRSHLP (208 aa)). The region spanning 210 to 523 (YEVTSEIDLN…GTDLLKENRN (314 aa)) is the Asparagine synthetase domain. Positions 503–525 (SAKMTKDGNKHGTDLLKENRNCS) are disordered. Residues 506 to 525 (MTKDGNKHGTDLLKENRNCS) are compositionally biased toward basic and acidic residues.

The protein resides in the cytoplasm. This chain is Asparagine synthetase domain-containing protein YML096W, found in Saccharomyces cerevisiae (strain ATCC 204508 / S288c) (Baker's yeast).